The sequence spans 505 residues: Deoxyguanosinetriphosphate triphosphohydrolase (505 aa).

The HD domain maps to 66–273; the sequence is RLTHSMEVQQ…MEAADDISYC (208 aa).

It belongs to the dGTPase family. Type 1 subfamily. In terms of assembly, homotetramer. Mg(2+) is required as a cofactor.

The enzyme catalyses dGTP + H2O = 2'-deoxyguanosine + triphosphate + H(+). In terms of biological role, dGTPase preferentially hydrolyzes dGTP over the other canonical NTPs. This chain is Deoxyguanosinetriphosphate triphosphohydrolase, found in Shigella flexneri.